Consider the following 94-residue polypeptide: Sulfocarbamoylase-1 (94 aa).

Homodimer. Ubiquitous (at protein level). Highest levels of expression in crystalline style followed by digestive gland and mantle.

Strongly inhibited by the serine proteinase inhibitor AEBSF. Weakly inhibited by the proteinase inhibitors BSF and aprotinin, and by EDTA. Not inhibited by the proteinase inhibitors bestatin, E-64 and leupeptin. Its function is as follows. Hydrolysis of sulfocarbamoyl esters of paralytic shellfish toxins. Does not hydrolyze the carbamoyl esters of paralytic shellfish toxins. Ester hydrolysis is significantly affected by the stereochemistry of sulfate esters at C-11 of the substrate toxin. The polypeptide is Sulfocarbamoylase-1 (Megangulus venulosus (Japanese bivalve)).